The chain runs to 190 residues: Elongation factor P 2 (190 aa).

It belongs to the elongation factor P family.

The protein localises to the cytoplasm. It functions in the pathway protein biosynthesis; polypeptide chain elongation. Involved in peptide bond synthesis. Stimulates efficient translation and peptide-bond synthesis on native or reconstituted 70S ribosomes in vitro. Probably functions indirectly by altering the affinity of the ribosome for aminoacyl-tRNA, thus increasing their reactivity as acceptors for peptidyl transferase. This is Elongation factor P 2 (efp2) from Chlamydia muridarum (strain MoPn / Nigg).